Here is a 156-residue protein sequence, read N- to C-terminus: Ribonuclease pancreatic (156 aa).

Positions 1 to 28 (MALEKSLVLLPLLVLILLVLGWVQPSLG) are cleaved as a signal peptide. Basic and acidic residues predominate over residues 33-43 (AKKFQRQHVDS). Residues 33–53 (AKKFQRQHVDSDSSPSSSSTY) are disordered. Substrate is bound by residues Lys-35 and Arg-38. His-40 (proton acceptor) is an active-site residue. 4 disulfide bridges follow: Cys-54-Cys-112, Cys-68-Cys-123, Cys-86-Cys-138, and Cys-93-Cys-100. N-linked (GlcNAc...) asparagine glycosylation occurs at Asn-62. Residues 69 to 73 (KPVNT) and Lys-94 each bind substrate. Asn-104 carries an N-linked (GlcNAc...) asparagine glycan. Arg-113 is a substrate binding site. Asn-116 is a glycosylation site (N-linked (GlcNAc...) asparagine). The Proton donor role is filled by His-147.

Belongs to the pancreatic ribonuclease family. In terms of assembly, monomer. Interacts with and forms tight 1:1 complexes with RNH1. Dimerization of two such complexes may occur. Interaction with RNH1 inhibits this protein. As to expression, pancreas and other tissues and body fluids (indicating it may have other physiological functions besides its role in digestion).

The protein resides in the secreted. It catalyses the reaction an [RNA] containing cytidine + H2O = an [RNA]-3'-cytidine-3'-phosphate + a 5'-hydroxy-ribonucleotide-3'-[RNA].. The enzyme catalyses an [RNA] containing uridine + H2O = an [RNA]-3'-uridine-3'-phosphate + a 5'-hydroxy-ribonucleotide-3'-[RNA].. In terms of biological role, endonuclease that catalyzes the cleavage of RNA on the 3' side of pyrimidine nucleotides. Acts on single-stranded and double-stranded RNA. This is Ribonuclease pancreatic (RNASE1) from Pan troglodytes (Chimpanzee).